A 152-amino-acid chain; its full sequence is uncharacterized protein (152 aa).

The region spanning 3-143 is the HTH marR-type domain; sequence EQKLCQAINL…IIEIFTILKS (141 aa). A DNA-binding region (H-T-H motif) is located at residues 55–78; it reads PGSLAMYQNVHKSAISNRLKKLLE.

This is an uncharacterized protein from Bacillus subtilis (strain 168).